Consider the following 307-residue polypeptide: Elongation factor Ts (307 aa).

The involved in Mg(2+) ion dislocation from EF-Tu stretch occupies residues 80 to 83; it reads TDFV.

The protein belongs to the EF-Ts family.

Its subcellular location is the cytoplasm. Its function is as follows. Associates with the EF-Tu.GDP complex and induces the exchange of GDP to GTP. It remains bound to the aminoacyl-tRNA.EF-Tu.GTP complex up to the GTP hydrolysis stage on the ribosome. This is Elongation factor Ts from Clostridium botulinum (strain Kyoto / Type A2).